A 597-amino-acid polypeptide reads, in one-letter code: Protein disulfide isomerase-like 1-4 (597 aa).

The signal sequence occupies residues 1–25 (MAFRVLLLFSLTALLIFSAVSPSFA). 2 stretches are compositionally biased toward acidic residues: residues 37-49 (LSFL…DDVP) and 61-84 (DEFE…EGDF). Positions 37–101 (LSFLEDLKED…SDPLPTPEID (65 aa)) are disordered. One can recognise a Thioredoxin 1 domain in the interval 85–208 (SDLGNPDSDP…IVTWVKKKIG (124 aa)). An N-linked (GlcNAc...) asparagine glycan is attached at Asn-112. Residues Cys-132 and Cys-135 each act as nucleophile in the active site. Residues Cys-132 and Cys-135 are joined by a disulfide bond. Asn-213 and Asn-342 each carry an N-linked (GlcNAc...) asparagine glycan. Residues 429–550 (FYKSDPIPEK…FYKFLRKHAT (122 aa)) form the Thioredoxin 2 domain. Residues Cys-471 and Cys-474 each act as nucleophile in the active site. Cys-471 and Cys-474 are joined by a disulfide. Residue Asn-524 is glycosylated (N-linked (GlcNAc...) asparagine). Positions 555–597 (LEKPASTESPKTAESTPKVETTETKESPDSTTKSSQSDSKDEL) are disordered. The segment covering 560–573 (STESPKTAESTPKV) has biased composition (polar residues). The Prevents secretion from ER motif lies at 594 to 597 (KDEL).

The protein belongs to the protein disulfide isomerase family. Interacts with MEE8 and MED37A. In terms of tissue distribution, expressed in germinating seedling, including the cotyledons and hypocotyl, in vascular tissues, in pollen grains, root tips, leaf trichomes, developing seeds and siliques.

Its subcellular location is the endoplasmic reticulum lumen. The protein localises to the golgi apparatus. The protein resides in the vacuole. It localises to the nucleus. It is found in the secreted. Its subcellular location is the cell wall. It catalyses the reaction Catalyzes the rearrangement of -S-S- bonds in proteins.. In terms of biological role, acts as a protein-folding catalyst that interacts with nascent polypeptides to catalyze the formation, isomerization, and reduction or oxidation of disulfide bonds. The protein is Protein disulfide isomerase-like 1-4 (PDIL1-4) of Arabidopsis thaliana (Mouse-ear cress).